Reading from the N-terminus, the 232-residue chain is MSIVNSIRAQIPPVHPEGYPFIGGFALVTLLFFWLWSPLGWIALVLTIWCALFFRNPVRVTPVRDDLVVSPADGRISMVTPVVPPAELGLGDKPLLRISIFMSVFNCHVNRAPVGGRIEKIVYTPGKFINAELDKASEDNERNAMVISTPSGQIGVVQIAGLIARRIVSFVRVGQTLATGERFGLIRFGSRLDVFLPEGSKALVSVGQTAIAGETVLADFRQGDGGRTYRAD.

Ser190 (schiff-base intermediate with substrate; via pyruvic acid) is an active-site residue. Residue Ser190 is modified to Pyruvic acid (Ser); by autocatalysis.

Belongs to the phosphatidylserine decarboxylase family. PSD-A subfamily. In terms of assembly, heterodimer of a large membrane-associated beta subunit and a small pyruvoyl-containing alpha subunit. Pyruvate serves as cofactor. Is synthesized initially as an inactive proenzyme. Formation of the active enzyme involves a self-maturation process in which the active site pyruvoyl group is generated from an internal serine residue via an autocatalytic post-translational modification. Two non-identical subunits are generated from the proenzyme in this reaction, and the pyruvate is formed at the N-terminus of the alpha chain, which is derived from the carboxyl end of the proenzyme. The post-translation cleavage follows an unusual pathway, termed non-hydrolytic serinolysis, in which the side chain hydroxyl group of the serine supplies its oxygen atom to form the C-terminus of the beta chain, while the remainder of the serine residue undergoes an oxidative deamination to produce ammonia and the pyruvoyl prosthetic group on the alpha chain.

Its subcellular location is the cell membrane. The enzyme catalyses a 1,2-diacyl-sn-glycero-3-phospho-L-serine + H(+) = a 1,2-diacyl-sn-glycero-3-phosphoethanolamine + CO2. Its pathway is phospholipid metabolism; phosphatidylethanolamine biosynthesis; phosphatidylethanolamine from CDP-diacylglycerol: step 2/2. Functionally, catalyzes the formation of phosphatidylethanolamine (PtdEtn) from phosphatidylserine (PtdSer). This chain is Phosphatidylserine decarboxylase proenzyme, found in Rhodopseudomonas palustris (strain BisA53).